The following is a 347-amino-acid chain: Putative coenzyme F420-dependent oxidoreductase Rv3520c (347 aa).

In Mycobacterium tuberculosis (strain ATCC 25618 / H37Rv), this protein is Putative coenzyme F420-dependent oxidoreductase Rv3520c.